The sequence spans 208 residues: Small ribosomal subunit protein uS4 (208 aa).

The region spanning 98–161 is the S4 RNA-binding domain; the sequence is QRLDNVVYRM…KTNSQILRAI (64 aa).

The protein belongs to the universal ribosomal protein uS4 family. In terms of assembly, part of the 30S ribosomal subunit. Contacts protein S5. The interaction surface between S4 and S5 is involved in control of translational fidelity.

In terms of biological role, one of the primary rRNA binding proteins, it binds directly to 16S rRNA where it nucleates assembly of the body of the 30S subunit. With S5 and S12 plays an important role in translational accuracy. The sequence is that of Small ribosomal subunit protein uS4 from Sulfurovum sp. (strain NBC37-1).